A 128-amino-acid polypeptide reads, in one-letter code: Small ribosomal subunit protein eS8 (128 aa).

Belongs to the eukaryotic ribosomal protein eS8 family. Part of the 30S ribosomal subunit.

In Methanococcus maripaludis (strain DSM 14266 / JCM 13030 / NBRC 101832 / S2 / LL), this protein is Small ribosomal subunit protein eS8.